Here is a 271-residue protein sequence, read N- to C-terminus: 3-methyl-2-oxobutanoate hydroxymethyltransferase (271 aa).

Positions 51 and 90 each coordinate Mg(2+). 3-methyl-2-oxobutanoate contacts are provided by residues 51 to 52, D90, and K118; that span reads DS. E120 contributes to the Mg(2+) binding site. Catalysis depends on E186, which acts as the Proton acceptor.

The protein belongs to the PanB family. As to quaternary structure, homodecamer; pentamer of dimers. The cofactor is Mg(2+).

Its subcellular location is the cytoplasm. It carries out the reaction 3-methyl-2-oxobutanoate + (6R)-5,10-methylene-5,6,7,8-tetrahydrofolate + H2O = 2-dehydropantoate + (6S)-5,6,7,8-tetrahydrofolate. Its pathway is cofactor biosynthesis; (R)-pantothenate biosynthesis; (R)-pantoate from 3-methyl-2-oxobutanoate: step 1/2. In terms of biological role, catalyzes the reversible reaction in which hydroxymethyl group from 5,10-methylenetetrahydrofolate is transferred onto alpha-ketoisovalerate to form ketopantoate. This Xanthomonas oryzae pv. oryzae (strain MAFF 311018) protein is 3-methyl-2-oxobutanoate hydroxymethyltransferase.